The chain runs to 66 residues: Large ribosomal subunit protein bL31 (66 aa).

Residues Cys-16, Cys-18, Cys-36, and Cys-39 each coordinate Zn(2+).

The protein belongs to the bacterial ribosomal protein bL31 family. Type A subfamily. Part of the 50S ribosomal subunit. It depends on Zn(2+) as a cofactor.

Binds the 23S rRNA. In Clostridioides difficile (strain 630) (Peptoclostridium difficile), this protein is Large ribosomal subunit protein bL31.